The following is a 183-amino-acid chain: MTATAQQLEFLKNSIQSIPDYPKPGILFRDVTSLLEDPKAYALSIELLVERYRHAGITKVVGTEARGFLFGAPVALGLGVGFVPVRKPGKLPRKTFAEDYALEYGTDTLELHCDAIQPGDVVLVVDDLLATGGTIEATVNLIRRAGGSVKDAAFIINLFDLSGEARLKALGVESYSLVSFPGH.

It belongs to the purine/pyrimidine phosphoribosyltransferase family. As to quaternary structure, homodimer.

It localises to the cytoplasm. It carries out the reaction AMP + diphosphate = 5-phospho-alpha-D-ribose 1-diphosphate + adenine. It functions in the pathway purine metabolism; AMP biosynthesis via salvage pathway; AMP from adenine: step 1/1. Catalyzes a salvage reaction resulting in the formation of AMP, that is energically less costly than de novo synthesis. This chain is Adenine phosphoribosyltransferase, found in Erwinia tasmaniensis (strain DSM 17950 / CFBP 7177 / CIP 109463 / NCPPB 4357 / Et1/99).